The following is a 512-amino-acid chain: GMP synthase [glutamine-hydrolyzing] (512 aa).

Residues Thr7 to Gly197 form the Glutamine amidotransferase type-1 domain. Residue Cys84 is the Nucleophile of the active site. Active-site residues include His171 and Glu173. A GMPS ATP-PPase domain is found at Trp198–Arg387. Ser225 to Ser231 serves as a coordination point for ATP.

As to quaternary structure, homodimer.

It carries out the reaction XMP + L-glutamine + ATP + H2O = GMP + L-glutamate + AMP + diphosphate + 2 H(+). It functions in the pathway purine metabolism; GMP biosynthesis; GMP from XMP (L-Gln route): step 1/1. In terms of biological role, catalyzes the synthesis of GMP from XMP. The chain is GMP synthase [glutamine-hydrolyzing] from Bacillus cereus (strain ATCC 10987 / NRS 248).